Consider the following 126-residue polypeptide: Alpha-lactalbumin (126 aa).

Residues 1–126 (RIFQICELSR…CNSDLDQWKC (126 aa)) enclose the C-type lysozyme domain. Cystine bridges form between cysteine 6-cysteine 126, cysteine 30-cysteine 117, cysteine 63-cysteine 82, and cysteine 78-cysteine 96. Asparagine 47 carries an N-linked (GlcNAc...) asparagine glycan. Positions 84, 87, 89, 92, and 93 each coordinate Ca(2+).

This sequence belongs to the glycosyl hydrolase 22 family. Lactose synthase (LS) is a heterodimer of a catalytic component, beta1,4-galactosyltransferase (beta4Gal-T1) and a regulatory component, alpha-lactalbumin (LA). Mammary gland specific. Secreted in milk.

The protein localises to the secreted. Regulatory subunit of lactose synthase, changes the substrate specificity of galactosyltransferase in the mammary gland making glucose a good acceptor substrate for this enzyme. This enables LS to synthesize lactose, the major carbohydrate component of milk. In other tissues, galactosyltransferase transfers galactose onto the N-acetylglucosamine of the oligosaccharide chains in glycoproteins. This is Alpha-lactalbumin (LALBA) from Ornithorhynchus anatinus (Duckbill platypus).